We begin with the raw amino-acid sequence, 153 residues long: Aspartate carbamoyltransferase regulatory chain (153 aa).

Zn(2+) is bound by residues Cys110, Cys115, Cys138, and Cys141.

Belongs to the PyrI family. Contains catalytic and regulatory chains. The cofactor is Zn(2+).

Functionally, involved in allosteric regulation of aspartate carbamoyltransferase. The sequence is that of Aspartate carbamoyltransferase regulatory chain from Bacteroides thetaiotaomicron (strain ATCC 29148 / DSM 2079 / JCM 5827 / CCUG 10774 / NCTC 10582 / VPI-5482 / E50).